The sequence spans 393 residues: MIGTPLKKSATKLMMLGCGELGKEVVIEAQRFGIETIAVDRYADAPAMQVAHRSHVANMLDRDALERIIKQESPDLIVPEIEAINTTFLLELEQQGFRIIPTARATNLTMNREGIRRLAAEDLNLPTAAYRFASSYEEFCQAVEEIGLPCVIKPIMSSSGKGQSTVKTPDDIEKAWNYARQGARGAGERVIIEAFIPFDYEITLLTVRHVDGTSYCPPIGHRQEGGDYQESWQPMPMTDKALAEAQRQAKVITEALGGAGLFGVEFFIQGDTVYFSEVSPRPHDTGMVTMATQNMSEFELHVRAVLGLPIPAIELLSPGASHVVLAGGQDDEVSFSGVEDALRVPGSKVRLFGKPDSRPGRRMGVALVVAPDVDTARKRAEEAAGKIRVEPVK.

Residues 20–21 and E80 contribute to the N(1)-(5-phospho-beta-D-ribosyl)glycinamide site; that span reads EL. ATP contacts are provided by residues R112, K153, 158–163, 193–196, and E201; these read SSGKGQ and EAFI. The region spanning 117–306 is the ATP-grasp domain; it reads RLAAEDLNLP…EFELHVRAVL (190 aa). Mg(2+) is bound by residues E265 and E277. N(1)-(5-phospho-beta-D-ribosyl)glycinamide is bound by residues D284, K354, and 361-362; that span reads RR.

This sequence belongs to the PurK/PurT family. In terms of assembly, homodimer.

It carries out the reaction N(1)-(5-phospho-beta-D-ribosyl)glycinamide + formate + ATP = N(2)-formyl-N(1)-(5-phospho-beta-D-ribosyl)glycinamide + ADP + phosphate + H(+). It functions in the pathway purine metabolism; IMP biosynthesis via de novo pathway; N(2)-formyl-N(1)-(5-phospho-D-ribosyl)glycinamide from N(1)-(5-phospho-D-ribosyl)glycinamide (formate route): step 1/1. Involved in the de novo purine biosynthesis. Catalyzes the transfer of formate to 5-phospho-ribosyl-glycinamide (GAR), producing 5-phospho-ribosyl-N-formylglycinamide (FGAR). Formate is provided by PurU via hydrolysis of 10-formyl-tetrahydrofolate. The chain is Formate-dependent phosphoribosylglycinamide formyltransferase from Syntrophotalea carbinolica (strain DSM 2380 / NBRC 103641 / GraBd1) (Pelobacter carbinolicus).